The following is a 254-amino-acid chain: tRNA pseudouridine synthase A (254 aa).

Asp52 functions as the Nucleophile in the catalytic mechanism. Residue Tyr110 participates in substrate binding.

It belongs to the tRNA pseudouridine synthase TruA family. In terms of assembly, homodimer.

The enzyme catalyses uridine(38/39/40) in tRNA = pseudouridine(38/39/40) in tRNA. Functionally, formation of pseudouridine at positions 38, 39 and 40 in the anticodon stem and loop of transfer RNAs. In Thermodesulfovibrio yellowstonii (strain ATCC 51303 / DSM 11347 / YP87), this protein is tRNA pseudouridine synthase A.